Here is a 55-residue protein sequence, read N- to C-terminus: Large ribosomal subunit protein bL33 (55 aa).

Belongs to the bacterial ribosomal protein bL33 family.

In Rhodopseudomonas palustris (strain HaA2), this protein is Large ribosomal subunit protein bL33.